We begin with the raw amino-acid sequence, 482 residues long: NADH-quinone oxidoreductase subunit N (482 aa).

14 helical membrane passes run 11-31, 37-57, 77-97, 106-126, 131-151, 166-186, 208-228, 255-275, 279-299, 304-324, 332-352, 376-396, 404-424, and 462-482; these read AVPE…GVFI, IPYY…WYIF, RFSV…FIYA, IPHT…VALV, LLTV…MVAL, FVIG…IFGA, LILV…LGTA, IAAY…LHVQ, MLIV…IVQS, MLAY…LCGT, MFYT…VVLM, AFMM…VGFI, ALIQ…AIVG, and LAVL…HLAF.

It belongs to the complex I subunit 2 family. In terms of assembly, NDH-1 is composed of 14 different subunits. Subunits NuoA, H, J, K, L, M, N constitute the membrane sector of the complex.

Its subcellular location is the cell inner membrane. It carries out the reaction a quinone + NADH + 5 H(+)(in) = a quinol + NAD(+) + 4 H(+)(out). In terms of biological role, NDH-1 shuttles electrons from NADH, via FMN and iron-sulfur (Fe-S) centers, to quinones in the respiratory chain. The immediate electron acceptor for the enzyme in this species is believed to be ubiquinone. Couples the redox reaction to proton translocation (for every two electrons transferred, four hydrogen ions are translocated across the cytoplasmic membrane), and thus conserves the redox energy in a proton gradient. This Coxiella burnetii (strain RSA 493 / Nine Mile phase I) protein is NADH-quinone oxidoreductase subunit N.